Here is a 31-residue protein sequence, read N- to C-terminus: Conotoxin pc6b (31 aa).

3 disulfide bridges follow: Cys2–Cys20, Cys9–Cys25, and Cys19–Cys29.

Belongs to the conotoxin O1 superfamily. In terms of tissue distribution, expressed by the venom duct.

It is found in the secreted. The chain is Conotoxin pc6b from Conus pictus (Cone snail).